The following is a 171-amino-acid chain: UPF0398 protein spyM18_1659 (171 aa).

It belongs to the UPF0398 family.

This chain is UPF0398 protein spyM18_1659, found in Streptococcus pyogenes serotype M18 (strain MGAS8232).